We begin with the raw amino-acid sequence, 458 residues long: Probable plasmid replicative DNA helicase (458 aa).

Residues 194–458 (KIDYVDGLPT…GKFTIQKEAW (265 aa)) form the SF4 helicase domain. Residue 225–232 (ARPAMGKT) participates in ATP binding.

Belongs to the helicase family. DnaB subfamily. As to quaternary structure, homohexamer.

It catalyses the reaction Couples ATP hydrolysis with the unwinding of duplex DNA at the replication fork by translocating in the 5'-3' direction. This creates two antiparallel DNA single strands (ssDNA). The leading ssDNA polymer is the template for DNA polymerase III holoenzyme which synthesizes a continuous strand.. The enzyme catalyses ATP + H2O = ADP + phosphate + H(+). In terms of biological role, a replicative DNA helicase, it participates in initiation and elongation during DNA replication. Travels ahead of the DNA replisome, separating dsDNA into templates for DNA synthesis. A processive ATP-dependent 5'-3' DNA helicase it has DNA-dependent ATPase activity. This chain is Probable plasmid replicative DNA helicase, found in Chlamydia psittaci (Chlamydophila psittaci).